The sequence spans 525 residues: Ribosomal protein S6 kinase beta-1 (525 aa).

Positions 28-32 match the TOS motif motif; it reads FDIDL. Residues 28–54 are disordered; it reads FDIDLDQPEDAGSEDELEEGGQLNESM. Residues 30 to 46 are compositionally biased toward acidic residues; it reads IDLDQPEDAGSEDELEE. Residues 91–352 enclose the Protein kinase domain; it reads FELLRVLGKG…AGEVQAHPFF (262 aa). ATP-binding positions include 97–105 and Lys-123; that span reads LGKGGYGKV. Asp-218 (proton acceptor) is an active-site residue. Thr-252 bears the Phosphothreonine; by PDPK1 mark. Residues 353-423 form the AGC-kinase C-terminal domain; sequence RHINWEELLA…VAPSVLESVK (71 aa). The tract at residues 380–399 is disordered; sequence SQFDSKFTRQTPVDSPDDST. Polar residues predominate over residues 381 to 399; that stretch reads QFDSKFTRQTPVDSPDDST. At Ser-394 the chain carries Phosphoserine. At Thr-412 the chain carries Phosphothreonine; by MTOR, NEK6 and NEK7. The tract at residues 424-525 is autoinhibitory domain; the sequence is EKFSFEPKIR…KRPEHLRMNL (102 aa). A phosphoserine mark is found at Ser-434 and Ser-441. Thr-444 carries the phosphothreonine modification. 2 positions are modified to phosphoserine: Ser-447 and Ser-452. The tract at residues 486 to 509 is disordered; sequence VTTSGEASAPLPIRQPNSGPYKKQ. An N6-acetyllysine modification is found at Lys-516.

The protein belongs to the protein kinase superfamily. AGC Ser/Thr protein kinase family. S6 kinase subfamily. As to quaternary structure, interacts with PPP1R9A/neurabin-1. Interacts with RPTOR. Interacts with IRS1. Interacts with EIF3B and EIF3C. Interacts with POLDIP3. Interacts with TRAF4. Interacts (via N-terminus) with IER5. In terms of processing, dephosphorylation by PPP1CC at Thr-412 in mitochondrion. Phosphorylation at Thr-412 is regulated by mTORC1. The phosphorylation at this site is maintained by an agonist-dependent autophosphorylation mechanism. Activated by phosphorylation at Thr-252 by PDPK1. As to expression, brain.

The protein resides in the cytoplasm. Its subcellular location is the synapse. The protein localises to the synaptosome. It localises to the mitochondrion outer membrane. It is found in the mitochondrion. The catalysed reaction is L-seryl-[protein] + ATP = O-phospho-L-seryl-[protein] + ADP + H(+). It carries out the reaction L-threonyl-[protein] + ATP = O-phospho-L-threonyl-[protein] + ADP + H(+). With respect to regulation, activation requires multiple phosphorylation events on serine/threonine residues. Activation appears to be first mediated by phosphorylation of multiple sites in the autoinhibitory domain, which facilitates phosphorylation at Thr-412, disrupting the autoinhibitory mechanism and allowing phosphorylation of Thr-252 by PDPK1. The active conformation of the kinase is believed to be stabilized by a mechanism involving three conserved phosphorylation sites located in the kinase domain activation loop (Thr-252) and in the AGC-kinase C-terminal domain (Ser-394 in the middle of the tail/linker region and Thr-412 within a hydrophobic motif at its end). Activated by mTORC1; isoform Alpha I and isoform Alpha II are sensitive to rapamycin, which inhibits activating phosphorylation at Thr-412. Activated by PDPK1. In terms of biological role, serine/threonine-protein kinase that acts downstream of mTOR signaling in response to growth factors and nutrients to promote cell proliferation, cell growth and cell cycle progression. Regulates protein synthesis through phosphorylation of EIF4B, RPS6 and EEF2K, and contributes to cell survival by repressing the pro-apoptotic function of BAD. Under conditions of nutrient depletion, the inactive form associates with the EIF3 translation initiation complex. Upon mitogenic stimulation, phosphorylation by the mechanistic target of rapamycin complex 1 (mTORC1) leads to dissociation from the EIF3 complex and activation. The active form then phosphorylates and activates several substrates in the pre-initiation complex, including the EIF2B complex and the cap-binding complex component EIF4B. Also controls translation initiation by phosphorylating a negative regulator of EIF4A, PDCD4, targeting it for ubiquitination and subsequent proteolysis. Promotes initiation of the pioneer round of protein synthesis by phosphorylating POLDIP3/SKAR. In response to IGF1, activates translation elongation by phosphorylating EEF2 kinase (EEF2K), which leads to its inhibition and thus activation of EEF2. Also plays a role in feedback regulation of mTORC2 by mTORC1 by phosphorylating MAPKAP1/SIN1, MTOR and RICTOR, resulting in the inhibition of mTORC2 and AKT1 signaling. Also involved in feedback regulation of mTORC1 and mTORC2 by phosphorylating DEPTOR. Mediates cell survival by phosphorylating the pro-apoptotic protein BAD and suppressing its pro-apoptotic function. Phosphorylates mitochondrial URI1 leading to dissociation of a URI1-PPP1CC complex. The free mitochondrial PPP1CC can then dephosphorylate RPS6KB1 at Thr-412, which is proposed to be a negative feedback mechanism for the RPS6KB1 anti-apoptotic function. Mediates TNF-alpha-induced insulin resistance by phosphorylating IRS1 at multiple serine residues, resulting in accelerated degradation of IRS1. In cells lacking functional TSC1-2 complex, constitutively phosphorylates and inhibits GSK3B. May be involved in cytoskeletal rearrangement through binding to neurabin. Phosphorylates and activates the pyrimidine biosynthesis enzyme CAD, downstream of MTOR. Following activation by mTORC1, phosphorylates EPRS and thereby plays a key role in fatty acid uptake by adipocytes and also most probably in interferon-gamma-induced translation inhibition. The protein is Ribosomal protein S6 kinase beta-1 (Rps6kb1) of Rattus norvegicus (Rat).